Here is a 673-residue protein sequence, read N- to C-terminus: Annexin A6 (673 aa).

Position 2 is an N-acetylalanine (A2). S13 bears the Phosphoserine mark. 8 Annexin repeats span residues 20–91 (FDAN…NLMR), 92–163 (PLAY…VLLQ), 175–247 (DLVQ…AVVK), 251–322 (STPE…KLCG), 363–434 (FNPD…GLMM), 435–506 (PPAH…SLAT), 521–595 (EDAQ…AIVQ), and 599–670 (NKPL…ALCG). A Phosphotyrosine modification is found at Y30. Residues K63, K68, K75, and K81 each carry the N6-acetyllysine modification. Y201 carries the post-translational modification Phosphotyrosine. Residues K306, K370, and K418 each carry the N6-acetyllysine modification. At S422 the chain carries Phosphoserine. K483 is subject to N6-acetyllysine. A Phosphoserine modification is found at S537. At K620 the chain carries N6-acetyllysine.

The protein belongs to the annexin family.

The protein resides in the cytoplasm. It localises to the melanosome. Functionally, may associate with CD21. May regulate the release of Ca(2+) from intracellular stores. The polypeptide is Annexin A6 (Anxa6) (Mus musculus (Mouse)).